The primary structure comprises 264 residues: MHQYQDLLERILSDGAEKTDRTGTGTLSVFGHQMRFNLSAGFPMLTTKRLPLKAIVHELLWFLKGDTNIKYLRDNGVTIWDEWADANGDLGPVYGHQWRSWPAPDGRSIDQIANVVDMIKRNPDSRRLIVSAWNPAEVDKMALPPCHCLFQFYVANGKLSCQLYQRSADVFLGVPFNIASYALLTMMVAQVTGLKPGDFVHSFGDTHLYSNHLEQAKLQLTRAPRALPVMRINPDVKDIFSFRFEDFELVGYDPHPHIKAEVAV.

DUMP is bound by residues arginine 21 and arginine 126–arginine 127. The active-site Nucleophile is cysteine 146. DUMP is bound by residues arginine 166–aspartate 169, asparagine 177, and histidine 207–tyrosine 209. Position 169 (aspartate 169) interacts with (6R)-5,10-methylene-5,6,7,8-tetrahydrofolate. Alanine 263 is a binding site for (6R)-5,10-methylene-5,6,7,8-tetrahydrofolate.

It belongs to the thymidylate synthase family. Bacterial-type ThyA subfamily. Homodimer.

The protein resides in the cytoplasm. The catalysed reaction is dUMP + (6R)-5,10-methylene-5,6,7,8-tetrahydrofolate = 7,8-dihydrofolate + dTMP. Its pathway is pyrimidine metabolism; dTTP biosynthesis. In terms of biological role, catalyzes the reductive methylation of 2'-deoxyuridine-5'-monophosphate (dUMP) to 2'-deoxythymidine-5'-monophosphate (dTMP) while utilizing 5,10-methylenetetrahydrofolate (mTHF) as the methyl donor and reductant in the reaction, yielding dihydrofolate (DHF) as a by-product. This enzymatic reaction provides an intracellular de novo source of dTMP, an essential precursor for DNA biosynthesis. The polypeptide is Thymidylate synthase (Bradyrhizobium diazoefficiens (strain JCM 10833 / BCRC 13528 / IAM 13628 / NBRC 14792 / USDA 110)).